The primary structure comprises 32 residues: ADSLTQFDGIKGRYSHEAFYEEKACDSCHLNK.

Residues His-16, Cys-25, Cys-28, and His-29 each coordinate heme.

In terms of assembly, monomer. In terms of processing, binds 1 heme group per subunit.

It is found in the periplasm. Its function is as follows. Participates in sulfate respiration coupled with phosphorylation by transferring electrons from the enzyme dehydrogenase to ferredoxin. The polypeptide is Cytochrome c3, 10 kDa (Desulfuromonas acetoxidans (Chloropseudomonas ethylica)).